Consider the following 361-residue polypeptide: Phospho-N-acetylmuramoyl-pentapeptide-transferase (361 aa).

The next 10 helical transmembrane spans lie at 25–45 (RGIL…PAVI), 73–93 (TMGG…WGDL), 98–118 (VWLV…DDWI), 139–159 (IFGL…AAIT), 168–188 (IALP…IVGF), 200–220 (GLAI…AYAS), 237–257 (AGEL…FLWF), 264–284 (VFMG…IAVI), 290–310 (VLVI…IQVV), and 339–359 (VIVR…ATLK).

Belongs to the glycosyltransferase 4 family. MraY subfamily. It depends on Mg(2+) as a cofactor.

It localises to the cell inner membrane. It carries out the reaction UDP-N-acetyl-alpha-D-muramoyl-L-alanyl-gamma-D-glutamyl-meso-2,6-diaminopimeloyl-D-alanyl-D-alanine + di-trans,octa-cis-undecaprenyl phosphate = di-trans,octa-cis-undecaprenyl diphospho-N-acetyl-alpha-D-muramoyl-L-alanyl-D-glutamyl-meso-2,6-diaminopimeloyl-D-alanyl-D-alanine + UMP. It participates in cell wall biogenesis; peptidoglycan biosynthesis. Catalyzes the initial step of the lipid cycle reactions in the biosynthesis of the cell wall peptidoglycan: transfers peptidoglycan precursor phospho-MurNAc-pentapeptide from UDP-MurNAc-pentapeptide onto the lipid carrier undecaprenyl phosphate, yielding undecaprenyl-pyrophosphoryl-MurNAc-pentapeptide, known as lipid I. In Xanthomonas euvesicatoria pv. vesicatoria (strain 85-10) (Xanthomonas campestris pv. vesicatoria), this protein is Phospho-N-acetylmuramoyl-pentapeptide-transferase.